We begin with the raw amino-acid sequence, 398 residues long: tRNA-specific 2-thiouridylase MnmA (398 aa).

ATP is bound by residues Gly33–Ser40 and Met59. Positions Asn119–Asp121 are interaction with target base in tRNA. Cys124 serves as the catalytic Nucleophile. A disulfide bridge connects residues Cys124 and Cys226. Gly148 lines the ATP pocket. The tract at residues Lys176–Gln178 is interaction with tRNA. Cys226 acts as the Cysteine persulfide intermediate in catalysis. Positions Arg343–Tyr344 are interaction with tRNA.

It belongs to the MnmA/TRMU family.

It localises to the cytoplasm. The enzyme catalyses S-sulfanyl-L-cysteinyl-[protein] + uridine(34) in tRNA + AH2 + ATP = 2-thiouridine(34) in tRNA + L-cysteinyl-[protein] + A + AMP + diphosphate + H(+). Catalyzes the 2-thiolation of uridine at the wobble position (U34) of tRNA, leading to the formation of s(2)U34. This is tRNA-specific 2-thiouridylase MnmA from Psychrobacter sp. (strain PRwf-1).